Consider the following 42-residue polypeptide: uncharacterized protein (42 aa).

A helical transmembrane segment spans residues 18–38 (VGAISLTVMMILFFIAIVWFL).

The protein resides in the host membrane. This is an uncharacterized protein from His1 virus (isolate Australia/Victoria) (His1V).